The primary structure comprises 150 residues: Protein Smg homolog (150 aa).

It belongs to the Smg family.

The sequence is that of Protein Smg homolog from Methylibium petroleiphilum (strain ATCC BAA-1232 / LMG 22953 / PM1).